The following is a 515-amino-acid chain: Glucose-6-phosphate 1-dehydrogenase (515 aa).

R53 and K160 together coordinate NADP(+). Substrate is bound by residues H190, K194, E228, and D247. The active-site Proton acceptor is the H252. K352 serves as a coordination point for substrate.

It belongs to the glucose-6-phosphate dehydrogenase family.

It carries out the reaction D-glucose 6-phosphate + NADP(+) = 6-phospho-D-glucono-1,5-lactone + NADPH + H(+). The protein operates within carbohydrate degradation; pentose phosphate pathway; D-ribulose 5-phosphate from D-glucose 6-phosphate (oxidative stage): step 1/3. In terms of biological role, catalyzes the oxidation of glucose 6-phosphate to 6-phosphogluconolactone. This chain is Glucose-6-phosphate 1-dehydrogenase, found in Treponema pallidum (strain Nichols).